Reading from the N-terminus, the 343-residue chain is Tribbles homolog 2 (343 aa).

The segment at 25 to 50 (EELSSIRSAEPSQSFSPNLGSPSPPE) is disordered. Positions 29–45 (SIRSAEPSQSFSPNLGS) are enriched in polar residues. The region spanning 61 to 308 (IGKYLLLEPL…SQEILDHPWF (248 aa)) is the Protein kinase domain.

This sequence belongs to the protein kinase superfamily. CAMK Ser/Thr protein kinase family. Tribbles subfamily. In terms of tissue distribution, expressed in granulosa cells of the dominant follicles of the ovary and down-regulated in ovulatory follicles.

It is found in the cytoplasm. The protein localises to the cytoskeleton. Interacts with MAPK kinases and regulates activation of MAP kinases. Does not display kinase activity. This Bos taurus (Bovine) protein is Tribbles homolog 2.